Reading from the N-terminus, the 236-residue chain is UPF0173 metal-dependent hydrolase Mnod_3315 (236 aa).

The protein belongs to the UPF0173 family.

This is UPF0173 metal-dependent hydrolase Mnod_3315 from Methylobacterium nodulans (strain LMG 21967 / CNCM I-2342 / ORS 2060).